Consider the following 221-residue polypeptide: GDP-perosamine N-acetyltransferase (221 aa).

The active-site Proton acceptor is the H139.

The protein belongs to the transferase hexapeptide repeat family. Homotrimer.

The enzyme catalyses GDP-alpha-D-perosamine + acetyl-CoA = GDP-N-acetyl-alpha-D-perosamine + CoA + H(+). It functions in the pathway bacterial outer membrane biogenesis; LPS O-antigen biosynthesis. Functionally, catalyzes the transfer of an acetyl residue from acetyl-CoA onto GDP-perosamine to form GDP-N-acetyl-perosamine. The sequence is that of GDP-perosamine N-acetyltransferase from Escherichia coli O157:H7.